The chain runs to 131 residues: Small ribosomal subunit protein bS6 (131 aa).

The interval 98-131 (EASPMVKAKDERRERRDDFANETADDSDAGDSEE) is disordered. Residues 104-116 (KAKDERRERRDDF) are compositionally biased toward basic and acidic residues. Acidic residues predominate over residues 120-131 (TADDSDAGDSEE).

Belongs to the bacterial ribosomal protein bS6 family.

Functionally, binds together with bS18 to 16S ribosomal RNA. The protein is Small ribosomal subunit protein bS6 of Enterobacter sp. (strain 638).